The following is a 159-amino-acid chain: Serine-protein kinase RsbW (159 aa).

The protein belongs to the anti-sigma-factor family.

The enzyme catalyses L-seryl-[protein] + ATP = O-phospho-L-seryl-[protein] + ADP + H(+). It catalyses the reaction L-threonyl-[protein] + ATP = O-phospho-L-threonyl-[protein] + ADP + H(+). In terms of biological role, negative regulator of sigma-B activity. Phosphorylates and inactivates its specific antagonist protein, RsbV. Upon phosphorylation of RsbV, RsbW is released and binds to sigma-B, thereby blocking its ability to form an RNA polymerase holoenzyme (E-sigma-B). In Staphylococcus aureus, this protein is Serine-protein kinase RsbW.